Here is a 119-residue protein sequence, read N- to C-terminus: Acidic phospholipase A2 natratoxin (119 aa).

7 disulfides stabilise this stretch: C11/C71, C26/C118, C28/C44, C43/C99, C50/C92, C60/C85, and C78/C90. 3 residues coordinate Ca(2+): Y27, G29, and G31. H47 is an active-site residue. A Ca(2+)-binding site is contributed by D48. D93 is an active-site residue.

It belongs to the phospholipase A2 family. Group I subfamily. D49 sub-subfamily. Ca(2+) is required as a cofactor. Expressed by the venom gland.

The protein localises to the secreted. It carries out the reaction a 1,2-diacyl-sn-glycero-3-phosphocholine + H2O = a 1-acyl-sn-glycero-3-phosphocholine + a fatty acid + H(+). In terms of biological role, snake venom phospholipase A2 (PLA2) that has an effectively inhibitory effect on A-type K(+) currents (Kv/KCN) in acutely dissociated rat dorsal root ganglion (DRG) neurons. This inhibitory effect is independent of its enzymatic activity. PLA2 catalyzes the calcium-dependent hydrolysis of the 2-acyl groups in 3-sn-phosphoglycerides. The sequence is that of Acidic phospholipase A2 natratoxin from Naja atra (Chinese cobra).